We begin with the raw amino-acid sequence, 247 residues long: tRNA pseudouridine synthase A (247 aa).

Residue Asp-52 is the Nucleophile of the active site. Tyr-113 contacts substrate.

This sequence belongs to the tRNA pseudouridine synthase TruA family. Homodimer.

The catalysed reaction is uridine(38/39/40) in tRNA = pseudouridine(38/39/40) in tRNA. Its function is as follows. Formation of pseudouridine at positions 38, 39 and 40 in the anticodon stem and loop of transfer RNAs. The protein is tRNA pseudouridine synthase A of Bartonella quintana (strain Toulouse) (Rochalimaea quintana).